Reading from the N-terminus, the 182-residue chain is 3-hydroxyanthranilate 3,4-dioxygenase (182 aa).

R46 lines the O2 pocket. Fe cation-binding residues include H50, E56, and H96. E56 contributes to the substrate binding site. Substrate is bound by residues R100 and E111. Fe cation-binding residues include C126, C129, C163, and C166.

This sequence belongs to the 3-HAO family. As to quaternary structure, homodimer. Requires Fe(2+) as cofactor.

It carries out the reaction 3-hydroxyanthranilate + O2 = (2Z,4Z)-2-amino-3-carboxymuconate 6-semialdehyde. It participates in cofactor biosynthesis; NAD(+) biosynthesis; quinolinate from L-kynurenine: step 3/3. In terms of biological role, catalyzes the oxidative ring opening of 3-hydroxyanthranilate to 2-amino-3-carboxymuconate semialdehyde, which spontaneously cyclizes to quinolinate. The chain is 3-hydroxyanthranilate 3,4-dioxygenase from Brucella anthropi (strain ATCC 49188 / DSM 6882 / CCUG 24695 / JCM 21032 / LMG 3331 / NBRC 15819 / NCTC 12168 / Alc 37) (Ochrobactrum anthropi).